We begin with the raw amino-acid sequence, 100 residues long: Large ribosomal subunit protein uL23 (100 aa).

Belongs to the universal ribosomal protein uL23 family. As to quaternary structure, part of the 50S ribosomal subunit. Contacts protein L29, and trigger factor when it is bound to the ribosome.

One of the early assembly proteins it binds 23S rRNA. One of the proteins that surrounds the polypeptide exit tunnel on the outside of the ribosome. Forms the main docking site for trigger factor binding to the ribosome. In Pasteurella multocida (strain Pm70), this protein is Large ribosomal subunit protein uL23.